Consider the following 300-residue polypeptide: Epimerase family protein SAR0825 (300 aa).

Belongs to the NAD(P)-dependent epimerase/dehydratase family. SDR39U1 subfamily.

The sequence is that of Epimerase family protein SAR0825 from Staphylococcus aureus (strain MRSA252).